A 106-amino-acid polypeptide reads, in one-letter code: Ribonuclease P protein component 4 (106 aa).

4 residues coordinate Zn(2+): Cys57, Cys60, Cys83, and Cys86.

This sequence belongs to the eukaryotic/archaeal RNase P protein component 4 family. Consists of a catalytic RNA component and at least 4-5 protein subunits. The cofactor is Zn(2+).

Its subcellular location is the cytoplasm. The catalysed reaction is Endonucleolytic cleavage of RNA, removing 5'-extranucleotides from tRNA precursor.. Functionally, part of ribonuclease P, a protein complex that generates mature tRNA molecules by cleaving their 5'-ends. In Saccharolobus solfataricus (strain ATCC 35092 / DSM 1617 / JCM 11322 / P2) (Sulfolobus solfataricus), this protein is Ribonuclease P protein component 4.